The primary structure comprises 513 residues: Maturase K (513 aa).

This sequence belongs to the intron maturase 2 family. MatK subfamily.

It is found in the plastid. It localises to the chloroplast. Functionally, usually encoded in the trnK tRNA gene intron. Probably assists in splicing its own and other chloroplast group II introns. The protein is Maturase K of Sporobolus indicus (Smut grass).